Consider the following 343-residue polypeptide: 4-hydroxy-3-methylbut-2-enyl diphosphate reductase (343 aa).

Cysteine 18 serves as a coordination point for [4Fe-4S] cluster. (2E)-4-hydroxy-3-methylbut-2-enyl diphosphate contacts are provided by histidine 47 and histidine 83. Histidine 47 and histidine 83 together coordinate dimethylallyl diphosphate. Histidine 47 and histidine 83 together coordinate isopentenyl diphosphate. Position 105 (cysteine 105) interacts with [4Fe-4S] cluster. Residue histidine 133 participates in (2E)-4-hydroxy-3-methylbut-2-enyl diphosphate binding. Histidine 133 contacts dimethylallyl diphosphate. Histidine 133 serves as a coordination point for isopentenyl diphosphate. Glutamate 135 functions as the Proton donor in the catalytic mechanism. Threonine 174 contributes to the (2E)-4-hydroxy-3-methylbut-2-enyl diphosphate binding site. Cysteine 204 contacts [4Fe-4S] cluster. (2E)-4-hydroxy-3-methylbut-2-enyl diphosphate-binding residues include serine 232, serine 233, asparagine 234, and serine 277. Dimethylallyl diphosphate-binding residues include serine 232, serine 233, asparagine 234, and serine 277. Isopentenyl diphosphate-binding residues include serine 232, serine 233, asparagine 234, and serine 277.

The protein belongs to the IspH family. It depends on [4Fe-4S] cluster as a cofactor.

It carries out the reaction isopentenyl diphosphate + 2 oxidized [2Fe-2S]-[ferredoxin] + H2O = (2E)-4-hydroxy-3-methylbut-2-enyl diphosphate + 2 reduced [2Fe-2S]-[ferredoxin] + 2 H(+). It catalyses the reaction dimethylallyl diphosphate + 2 oxidized [2Fe-2S]-[ferredoxin] + H2O = (2E)-4-hydroxy-3-methylbut-2-enyl diphosphate + 2 reduced [2Fe-2S]-[ferredoxin] + 2 H(+). It participates in isoprenoid biosynthesis; dimethylallyl diphosphate biosynthesis; dimethylallyl diphosphate from (2E)-4-hydroxy-3-methylbutenyl diphosphate: step 1/1. The protein operates within isoprenoid biosynthesis; isopentenyl diphosphate biosynthesis via DXP pathway; isopentenyl diphosphate from 1-deoxy-D-xylulose 5-phosphate: step 6/6. Functionally, catalyzes the conversion of 1-hydroxy-2-methyl-2-(E)-butenyl 4-diphosphate (HMBPP) into a mixture of isopentenyl diphosphate (IPP) and dimethylallyl diphosphate (DMAPP). Acts in the terminal step of the DOXP/MEP pathway for isoprenoid precursor biosynthesis. The protein is 4-hydroxy-3-methylbut-2-enyl diphosphate reductase of Bartonella henselae (strain ATCC 49882 / DSM 28221 / CCUG 30454 / Houston 1) (Rochalimaea henselae).